Reading from the N-terminus, the 124-residue chain is Small ribosomal subunit protein uS12 (124 aa).

Residue aspartate 89 is modified to 3-methylthioaspartic acid.

The protein belongs to the universal ribosomal protein uS12 family. As to quaternary structure, part of the 30S ribosomal subunit. Contacts proteins S8 and S17. May interact with IF1 in the 30S initiation complex.

With S4 and S5 plays an important role in translational accuracy. Functionally, interacts with and stabilizes bases of the 16S rRNA that are involved in tRNA selection in the A site and with the mRNA backbone. Located at the interface of the 30S and 50S subunits, it traverses the body of the 30S subunit contacting proteins on the other side and probably holding the rRNA structure together. The combined cluster of proteins S8, S12 and S17 appears to hold together the shoulder and platform of the 30S subunit. In Haemophilus ducreyi (strain 35000HP / ATCC 700724), this protein is Small ribosomal subunit protein uS12.